The primary structure comprises 676 residues: RNA helicase NPH-II (676 aa).

The Helicase ATP-binding domain occupies 172–347 (FSAWISHRPV…VFLPNPAFIH (176 aa)). Residue 185–192 (GGTGVGKT) coordinates ATP. The short motif at 296-299 (DEVH) is the DEXH box element. In terms of domain architecture, Helicase C-terminal spans 366–535 (NPSSRMAYIE…NYILYANKFN (170 aa)).

The protein belongs to the DEAD box helicase family. DEAH subfamily. As to quaternary structure, monomer.

The protein resides in the virion. The catalysed reaction is ATP + H2O = ADP + phosphate + H(+). In terms of biological role, NTP-dependent helicase that catalyzes unidirectional unwinding of 3'tailed duplex RNAs and plays an important role during transcription of early mRNAs, presumably by preventing R-loop formation behind the elongating RNA polymerase. Might also play a role in the export of newly synthesized mRNA chains out of the core into the cytoplasm. Required for replication and propagation of viral particles. The sequence is that of RNA helicase NPH-II (OPG084) from Vaccinia virus (strain Ankara) (VACV).